The following is a 175-amino-acid chain: Phytochrome-interacting ankyrin-repeat protein 1 (175 aa).

3 ANK repeats span residues 30–59, 67–96, and 102–131; these read RGWT…DVNA, KGMT…NMEA, and CGWT…FLPD.

Interacts with phytochrome A (PHYA), both in Pr and Pfr forms.

It localises to the cytoplasm. The protein localises to the nucleus. It is found in the mitochondrion. In Arabidopsis thaliana (Mouse-ear cress), this protein is Phytochrome-interacting ankyrin-repeat protein 1.